The primary structure comprises 148 residues: Endoribonuclease YbeY (148 aa).

Zn(2+)-binding residues include His-113, His-117, and His-123.

Belongs to the endoribonuclease YbeY family. Zn(2+) serves as cofactor.

The protein resides in the cytoplasm. Single strand-specific metallo-endoribonuclease involved in late-stage 70S ribosome quality control and in maturation of the 3' terminus of the 16S rRNA. This Borrelia turicatae (strain 91E135) protein is Endoribonuclease YbeY.